Reading from the N-terminus, the 382-residue chain is MGDWSALGKLLDKVQAYSTAGGKVWLSVLFIFRILLLGTAVESAWGDEQSAFRCNTQQPGCENVCYDKSFPISHVRFWVLQIIFVSVPTLLYLAHVFYVMRKEEKLNKKEEELKVAQTDGVNVEMHLKQIEIKKFKYGIEEHGKVKMRGGLLRTYIISILFKSVFEVAFLLIQWYIYGFSLSAVYTCKRDPCPHQVDCFLSRPTEKTIFIIFMLVVSLVSLALNIIELFYAFFKGVKDRVKGKSDPYHATTGPLSPSKDCGSPKYAYFNGCSSPTAPLSPMSPPGYKLVTGDRNNSSCRNYNKQASEQNWANYSAEQNRMGQAGSTISNSHAQPFDFPDDNQNSKKLDAGHELQPLAIVDQRPSSRASSRASSRPRPDDLEI.

Over 2-23 the chain is Cytoplasmic; it reads GDWSALGKLLDKVQAYSTAGGK. Position 5 is a phosphoserine (S5). The chain crosses the membrane as a helical span at residues 24–44; it reads VWLSVLFIFRILLLGTAVESA. Residues 45–76 lie on the Extracellular side of the membrane; it reads WGDEQSAFRCNTQQPGCENVCYDKSFPISHVR. 2 disulfide bridges follow: C54-C192 and C187-C198. A helical transmembrane segment spans residues 77-97; sequence FWVLQIIFVSVPTLLYLAHVF. At 98 to 155 the chain is on the cytoplasmic side; the sequence is YVMRKEEKLNKKEEELKVAQTDGVNVEMHLKQIEIKKFKYGIEEHGKVKMRGGLLRTY. K144 is covalently cross-linked (Glycyl lysine isopeptide (Lys-Gly) (interchain with G-Cter in SUMO)). A helical transmembrane segment spans residues 156 to 176; it reads IISILFKSVFEVAFLLIQWYI. The Extracellular segment spans residues 177–207; sequence YGFSLSAVYTCKRDPCPHQVDCFLSRPTEKT. Residues 208-228 traverse the membrane as a helical segment; sequence IFIIFMLVVSLVSLALNIIEL. Topologically, residues 229-382 are cytoplasmic; it reads FYAFFKGVKD…SRPRPDDLEI (154 aa). A Glycyl lysine isopeptide (Lys-Gly) (interchain with G-Cter in SUMO) cross-link involves residue K237. The segment at 244–382 is interaction with NOV; the sequence is SDPYHATTGP…SRPRPDDLEI (139 aa). Y247 bears the Phosphotyrosine mark. Residues S255, S257, and S262 each carry the phosphoserine modification. Residues 264–382 are interaction with UBQLN4; sequence KYAYFNGCSS…SRPRPDDLEI (119 aa). S-nitrosocysteine is present on C271. Position 275 is a phosphothreonine (T275). 2 positions are modified to phosphoserine: S306 and S314. Residues 317 to 332 show a composition bias toward polar residues; it reads QNRMGQAGSTISNSHA. A disordered region spans residues 317–382; that stretch reads QNRMGQAGST…SRPRPDDLEI (66 aa). A Phosphoserine; by CK1 modification is found at S325. Phosphothreonine is present on T326. Phosphoserine; by CK1 occurs at positions 328 and 330. Residues 342 to 351 show a composition bias toward basic and acidic residues; that stretch reads QNSKKLDAGH. Phosphoserine occurs at positions 344 and 365. A compositionally biased stretch (low complexity) spans 362 to 374; that stretch reads RPSSRASSRASSR. S368 carries the phosphoserine; by PKC/PRKCG and PKC/PRKCD modification. 2 positions are modified to phosphoserine: S369 and S373.

Belongs to the connexin family. Alpha-type (group II) subfamily. A connexon is composed of a hexamer of connexins. Interacts with SGSM3. Interacts with RIC1/CIP150. Interacts with CNST and CSNK1D. Interacts (via C-terminus) with TJP1. Interacts (via C-terminus) with SRC (via SH3 domain). Interacts (not ubiquitinated) with UBQLN4 (via UBA domain). Interacts with NOV. Interacts with TMEM65. Interacts with ANK3/ANKG and PKP2. In terms of processing, phosphorylation at Ser-325, Ser-328 and Ser-330 by CK1 modulates gap junction assembly. Phosphorylated at Ser-368 by PRKCG; phosphorylation induces disassembly of gap junction plaques and inhibition of gap junction activity. Phosphorylation at Ser-368 by PRKCD triggers its internalization into small vesicles leading to proteasome-mediated degradation. Post-translationally, sumoylated with SUMO1, SUMO2 and SUMO3, which may regulate the level of functional Cx43 gap junctions at the plasma membrane. May be desumoylated by SENP1 or SENP2. S-nitrosylation at Cys-271 is enriched at the muscle endothelial gap junction in arteries, it augments channel permeability and may regulate of smooth muscle cell to endothelial cell communication. In terms of processing, acetylated in the developing cortex; leading to delocalization from the cell membrane.

Its subcellular location is the cell membrane. It is found in the cell junction. The protein resides in the gap junction. The protein localises to the endoplasmic reticulum. Its function is as follows. Gap junction protein that acts as a regulator of bladder capacity. A gap junction consists of a cluster of closely packed pairs of transmembrane channels, the connexons, through which materials of low MW diffuse from one cell to a neighboring cell. May play a critical role in the physiology of hearing by participating in the recycling of potassium to the cochlear endolymph. Negative regulator of bladder functional capacity: acts by enhancing intercellular electrical and chemical transmission, thus sensitizing bladder muscles to cholinergic neural stimuli and causing them to contract. May play a role in cell growth inhibition through the regulation of NOV expression and localization. Plays an essential role in gap junction communication in the ventricles. The sequence is that of Gap junction alpha-1 protein (GJA1) from Sus scrofa (Pig).